The sequence spans 269 residues: Ribosomal RNA small subunit methyltransferase A (269 aa).

Residues Asn20, Leu22, Gly47, Glu68, Asp90, and Asn110 each contribute to the S-adenosyl-L-methionine site.

This sequence belongs to the class I-like SAM-binding methyltransferase superfamily. rRNA adenine N(6)-methyltransferase family. RsmA subfamily.

It localises to the cytoplasm. The catalysed reaction is adenosine(1518)/adenosine(1519) in 16S rRNA + 4 S-adenosyl-L-methionine = N(6)-dimethyladenosine(1518)/N(6)-dimethyladenosine(1519) in 16S rRNA + 4 S-adenosyl-L-homocysteine + 4 H(+). Specifically dimethylates two adjacent adenosines (A1518 and A1519) in the loop of a conserved hairpin near the 3'-end of 16S rRNA in the 30S particle. May play a critical role in biogenesis of 30S subunits. In Chlorobium phaeobacteroides (strain DSM 266 / SMG 266 / 2430), this protein is Ribosomal RNA small subunit methyltransferase A.